Reading from the N-terminus, the 4540-residue chain is Dynein heavy chain, cytoplasmic (4540 aa).

The segment at 1-1796 (MEESETQLNV…LIQMGNAQFH (1796 aa)) is stem. Coiled-coil stretches lie at residues 440-482 (EHIK…NVQQ), 698-722 (RVNYEKKLSQLFKEVRNLSNMKTKV), 794-827 (VKKFTDKVFELEQAVNGLNERIGQIESLCEAMKT), 975-995 (QQLIKDAYSQIGQLLEDMEQY), 1169-1251 (RSKK…LKMD), and 1295-1311 (QNKKIKDTCDEAQKQLN). AAA stretches follow at residues 1797 to 2018 (YGFE…VLNS), 2091 to 2348 (KELA…FTRI), 2457 to 2705 (EIDP…WKYA), and 2796 to 3056 (QFNE…AKRF). Residues 1835–1842 (GPAGTGKT), 2129–2136 (GPCGCGKS), 2496–2503 (GPPGSGKT), and 2834–2841 (GSSGVGKT) contribute to the ATP site. 4 coiled-coil regions span residues 3076-3182 (NEKK…NAKQ), 3289-3367 (QLKY…RSQA), 3653-3688 (EDEKVIQTLEKLKKEAAVIVQEMKQADTIMNEVMNT), and 3820-3851 (QQLKQLEGITQQNQTFNRLIDNLNKNEDRWLN). A stalk region spans residues 3076–3367 (NEKKSQLEDQ…VQEKVTRSQA (292 aa)). Residues 3140 to 3159 (KKKEDSTRLSSDAEKKAKEM) form a disordered region. The interval 3444 to 3673 (LSRPSDRLNW…LKKEAAVIVQ (230 aa)) is AAA 5. The tract at residues 3908–4123 (ARKLINQILG…QRCSLDLIDE (216 aa)) is AAA 6. Coiled coils occupy residues 4238-4259 (QKLITKVQNLQQEGEEEITQIE) and 4313-4342 (RFLDREITVASKLLKAVRQNIEELIQLAQG).

It belongs to the dynein heavy chain family. In terms of assembly, consists of at least two heavy chains and a number of intermediate and light chains.

The protein resides in the cytoplasm. It is found in the cytoskeleton. Functionally, cytoplasmic dynein acts as a motor for the intracellular retrograde motility of vesicles and organelles along microtubules. Dynein has ATPase activity; the force-producing power stroke is thought to occur on release of ADP. The sequence is that of Dynein heavy chain, cytoplasmic (DHC-8) from Paramecium tetraurelia.